The primary structure comprises 354 residues: Tryptophan--tRNA ligase (354 aa).

Residues 13 to 15 (QPT) and 21 to 22 (GN) contribute to the ATP site. The short motif at 14-22 (PTGNLHLGN) is the 'HIGH' region element. Asp-137 contributes to the L-tryptophan binding site. ATP contacts are provided by residues 149-151 (GDD), Val-208, and 217-221 (KMSKS). The 'KMSKS' region motif lies at 217 to 221 (KMSKS).

This sequence belongs to the class-I aminoacyl-tRNA synthetase family. Homodimer.

The protein localises to the cytoplasm. The catalysed reaction is tRNA(Trp) + L-tryptophan + ATP = L-tryptophyl-tRNA(Trp) + AMP + diphosphate + H(+). Its function is as follows. Catalyzes the attachment of tryptophan to tRNA(Trp). In Agrobacterium fabrum (strain C58 / ATCC 33970) (Agrobacterium tumefaciens (strain C58)), this protein is Tryptophan--tRNA ligase.